The primary structure comprises 231 residues: Uroporphyrinogen-III C-methyltransferase (231 aa).

Residues Pro-10, 85-87, 115-116, Met-166, and Ala-218 each bind S-adenosyl-L-homocysteine; these read GGD and TS.

The protein belongs to the precorrin methyltransferase family. In terms of assembly, homodimer.

It carries out the reaction uroporphyrinogen III + 2 S-adenosyl-L-methionine = precorrin-2 + 2 S-adenosyl-L-homocysteine + H(+). The catalysed reaction is uroporphyrinogen III + S-adenosyl-L-methionine = precorrin-1 + S-adenosyl-L-homocysteine + H(+). It catalyses the reaction precorrin-1 + S-adenosyl-L-methionine = precorrin-2 + S-adenosyl-L-homocysteine. It participates in cofactor biosynthesis; adenosylcobalamin biosynthesis; precorrin-2 from uroporphyrinogen III: step 1/1. Its activity is regulated as follows. Does not show substrate inhibition at uroporphyrinogen III concentrations of up to 20 uM, in contrast to SUMT from Sinorhizobium (previously believed to be P.denitrificans). Functionally, catalyzes the two successive C-2 and C-7 methylation reactions involved in the conversion of uroporphyrinogen III to precorrin-2 via the intermediate formation of precorrin-1. It is a step in the biosynthesis of both cobalamin (vitamin B12) and coenzyme F430. This is Uroporphyrinogen-III C-methyltransferase (cobA) from Methanobacterium ivanovii.